Here is a 282-residue protein sequence, read N- to C-terminus: Heat stress transcription factor A-7b (282 aa).

Composition is skewed to low complexity over residues 1-11 (MDPSSSSRARS) and 120-134 (SSSS…QSQP). Disordered regions lie at residues 1 to 24 (MDPS…LQEA) and 117 to 139 (RRTS…AHDP). A DNA-binding region spans residues 26–120 (PSPFLTKTFE…LLKSIKRRTS (95 aa)). The hydrophobic repeat HR-A/B stretch occupies residues 137 to 196 (HDPGVELPQLREERHVLMMEISTLRQEEQRARGYVQAMEQRINGAEKKQRHMMSFLRRAV). A Nuclear localization signal motif is present at residues 208–212 (QKRDR). The Nuclear export signal signature appears at 232–240 (LSELEALAL). The AHA signature appears at 259–268 (DGFWEELLMN).

This sequence belongs to the HSF family. Class A subfamily. In terms of assembly, homotrimer. Exhibits temperature-dependent phosphorylation.

It is found in the cytoplasm. Its subcellular location is the nucleus. Transcriptional activator that specifically binds DNA sequence 5'-AGAAnnTTCT-3' known as heat shock promoter elements (HSE). The chain is Heat stress transcription factor A-7b (HSFA7B) from Arabidopsis thaliana (Mouse-ear cress).